A 518-amino-acid polypeptide reads, in one-letter code: Organic cation/carnitine transporter 3 (518 aa).

Residues 1–23 (MADSTRPLLSDFNSSESNLPPPR) are disordered. Residues 1–32 (MADSTRPLLSDFNSSESNLPPPRSLEETIERC) are Cytoplasmic-facing. The helical transmembrane segment at 33-53 (IGDFGWAQFLQAALVSFAWFF) threads the bilayer. Over 54–122 (DAQQTFITVF…LQCAGSFLKG (69 aa)) the chain is Extracellular. N-linked (GlcNAc...) asparagine glycosylation is found at asparagine 83 and asparagine 94. The chain crosses the membrane as a helical span at residues 123-143 (FPASSFFLGCLIGGLALSTLA). Topologically, residues 144–157 (DSSLGRKNMLLLSC) are cytoplasmic. A helical transmembrane segment spans residues 158–178 (LIMSLSSMLTAFSTSIWVYAF). Residues 179 to 180 (LR) lie on the Extracellular side of the membrane. A helical membrane pass occupies residues 181–197 (FLNGCGRATIGTCALVL). Position 198–205 (198–205 (STELVGKK)) interacts with ATP. Residues 198-210 (STELVGKKWRGQV) lie on the Cytoplasmic side of the membrane. The chain crosses the membrane as a helical span at residues 211 to 231 (GAMGFFCFTLGFLSLPMLGYI). Topologically, residues 232–239 (NEGNSWRN) are extracellular. Residues 240–259 (LYVWTSIPTLIYCCLVRSFV) traverse the membrane as a helical segment. The Cytoplasmic portion of the chain corresponds to 260-325 (RESPRWLIVK…LVRKSWSFRR (66 aa)). A helical membrane pass occupies residues 326–346 (LLAAMVVGFGIGMVYYGMPLA). Residues 347–355 (LTNLNFNLY) are Extracellular-facing. Residues 356–376 (LGVVFNALSEFPAFLITFFFI) form a helical membrane-spanning segment. At 377–383 (DKINRRD) the chain is on the cytoplasmic side. The helical transmembrane segment at 384–404 (ALIGFTALSGISSALIAVLGQ) threads the bilayer. Residues 405–410 (QLGSLQ) are Extracellular-facing. A helical transmembrane segment spans residues 411 to 431 (IVLELVSFFSACTAFNMTLIY). The Cytoplasmic segment spans residues 432–443 (TIEMFPTCVRNS). A helical transmembrane segment spans residues 444–464 (AISMVRQALVFGGVFSPVMVA). The Extracellular portion of the chain corresponds to 465–470 (AGRENQ). The chain crosses the membrane as a helical span at residues 471-491 (FWSYGLFGLIIGLCGLFVFGL). At 492-518 (PETRGSVLCDTMDEEEYKTLAKRQFIG) the chain is on the cytoplasmic side.

Belongs to the major facilitator (TC 2.A.1) superfamily. Organic cation transporter (TC 2.A.1.19) family. Mostly expressed in siliques, mainly in young seeds. Present in stems (cortical cells and parenchyma cells), at the basis of secondary inflorescences, and at the base of trichomes.

The protein resides in the vacuole membrane. Its function is as follows. High affinity carnitine transporter involved in the active cellular uptake of carnitine. Also transports organic cations. This is Organic cation/carnitine transporter 3 (OCT3) from Arabidopsis thaliana (Mouse-ear cress).